A 203-amino-acid polypeptide reads, in one-letter code: Ribosomal RNA small subunit methyltransferase G (203 aa).

Residues glycine 75, leucine 80, 126-127, and arginine 141 each bind S-adenosyl-L-methionine; that span reads VE.

Belongs to the methyltransferase superfamily. RNA methyltransferase RsmG family.

The protein localises to the cytoplasm. The enzyme catalyses guanosine(527) in 16S rRNA + S-adenosyl-L-methionine = N(7)-methylguanosine(527) in 16S rRNA + S-adenosyl-L-homocysteine. Functionally, specifically methylates the N7 position of guanine in position 527 of 16S rRNA. The polypeptide is Ribosomal RNA small subunit methyltransferase G (Ruthia magnifica subsp. Calyptogena magnifica).